A 553-amino-acid polypeptide reads, in one-letter code: Formate--tetrahydrofolate ligase (553 aa).

65 to 72 is a binding site for ATP; the sequence is TPAGEGKS.

The protein belongs to the formate--tetrahydrofolate ligase family.

The catalysed reaction is (6S)-5,6,7,8-tetrahydrofolate + formate + ATP = (6R)-10-formyltetrahydrofolate + ADP + phosphate. It functions in the pathway one-carbon metabolism; tetrahydrofolate interconversion. This chain is Formate--tetrahydrofolate ligase, found in Brachyspira hyodysenteriae (strain ATCC 49526 / WA1).